The sequence spans 412 residues: CinA-like protein (412 aa).

The protein belongs to the CinA family.

This chain is CinA-like protein, found in Kosmotoga olearia (strain ATCC BAA-1733 / DSM 21960 / TBF 19.5.1).